Reading from the N-terminus, the 321-residue chain is MTSTRLPQNIGEACQQANNLGVNAPELARFQDEPPQMASGDVGKSGYLRLGFARRGDRSILAQMKRRVPYLVQRALYWDEALPQMPCVFMISTSGCILQGDRLALDIHVAPEAFGHVTTQSATKIHSMENNYAAQVQTIQIEQGGYLEMMPDPVIPHSGSRFITDTQITIHPTATLIYSEIIMSGRKYHLADQGFKFDVYSSRITATDFDGKILFTERYVLEPKKQSLNSVGVMGPFHVFGNVILLTPQLHHDRILARMAPQYDAETGIASGTSRLPHQCGLIFKVLGKETYQVKAGIRLFWRIAREEILGVTLPEPFIWR.

The protein belongs to the UreD family. As to quaternary structure, ureD, UreF and UreG form a complex that acts as a GTP-hydrolysis-dependent molecular chaperone, activating the urease apoprotein by helping to assemble the nickel containing metallocenter of UreC. The UreE protein probably delivers the nickel.

It localises to the cytoplasm. Required for maturation of urease via the functional incorporation of the urease nickel metallocenter. The chain is Urease accessory protein UreD from Photorhabdus laumondii subsp. laumondii (strain DSM 15139 / CIP 105565 / TT01) (Photorhabdus luminescens subsp. laumondii).